The sequence spans 265 residues: Novel plant SNARE 12 (265 aa).

Residues 1–217 (MASELPMSPH…IGRQVATDKC (217 aa)) are Cytoplasmic-facing. The stretch at 32–106 (LDKIKDSSRQ…ALRKTYLNTL (75 aa)) forms a coiled coil. A Phosphoserine modification is found at Ser-74. Positions 146–208 (MKRMDETDQA…KKASQLVKEI (63 aa)) constitute a t-SNARE coiled-coil homology domain. The helical; Anchor for type IV membrane protein transmembrane segment at 218–238 (IMAFLFLIVCGVIAIIIVKIV) threads the bilayer. At 239 to 265 (NPNNKDIRDIPGLAPPAQSRKLLYFRE) the chain is on the vesicular side.

It belongs to the novel plant SNARE family. In terms of tissue distribution, expressed in roots, stems, flower, siliques and leaves.

It is found in the membrane. Vesicle trafficking protein that functions in the secretory pathway. This is Novel plant SNARE 12 (NPSN12) from Arabidopsis thaliana (Mouse-ear cress).